The chain runs to 521 residues: Cytochrome P450 1A1 (521 aa).

Phenylalanine 229 lines the substrate pocket. Cysteine 463 contacts heme.

The protein belongs to the cytochrome P450 family. Heme serves as cofactor.

It localises to the endoplasmic reticulum membrane. The protein localises to the microsome membrane. It carries out the reaction an organic molecule + reduced [NADPH--hemoprotein reductase] + O2 = an alcohol + oxidized [NADPH--hemoprotein reductase] + H2O + H(+). Functionally, cytochromes P450 are a group of heme-thiolate monooxygenases. They oxidize a variety of structurally unrelated compounds, including steroids, fatty acids, and xenobiotics. In Chelon saliens (Leaping mullet), this protein is Cytochrome P450 1A1 (cyp1a1).